The chain runs to 256 residues: Thiazole synthase (256 aa).

K96 functions as the Schiff-base intermediate with DXP in the catalytic mechanism. 1-deoxy-D-xylulose 5-phosphate is bound by residues G157, 184–185 (AG), and 206–207 (NT).

The protein belongs to the ThiG family. Homotetramer. Forms heterodimers with either ThiH or ThiS.

Its subcellular location is the cytoplasm. The catalysed reaction is [ThiS sulfur-carrier protein]-C-terminal-Gly-aminoethanethioate + 2-iminoacetate + 1-deoxy-D-xylulose 5-phosphate = [ThiS sulfur-carrier protein]-C-terminal Gly-Gly + 2-[(2R,5Z)-2-carboxy-4-methylthiazol-5(2H)-ylidene]ethyl phosphate + 2 H2O + H(+). The protein operates within cofactor biosynthesis; thiamine diphosphate biosynthesis. In terms of biological role, catalyzes the rearrangement of 1-deoxy-D-xylulose 5-phosphate (DXP) to produce the thiazole phosphate moiety of thiamine. Sulfur is provided by the thiocarboxylate moiety of the carrier protein ThiS. In vitro, sulfur can be provided by H(2)S. This chain is Thiazole synthase, found in Brucella abortus (strain S19).